The sequence spans 121 residues: MVSDCITRSERRKKRVRLKLRRNSSLLRLSIFKSNRHFYVQLIDDKCGRTFASASTLESEVIAVTNRKVNSNAVKIVAKLMSDRLNKLGNCKKFVFDRGPYKYTGIVSEFANELRNYGFEI.

Belongs to the universal ribosomal protein uL18 family. Part of the 50S ribosomal subunit; part of the 5S rRNA/L5/L18/L25 subcomplex. Contacts the 5S and 23S rRNAs.

This is one of the proteins that bind and probably mediate the attachment of the 5S RNA into the large ribosomal subunit, where it forms part of the central protuberance. In Ehrlichia canis (strain Jake), this protein is Large ribosomal subunit protein uL18.